The following is a 273-amino-acid chain: Large ribosomal subunit protein uL2 (273 aa).

The tract at residues 224–264 is disordered; that stretch reads AMNPVDHPHGGGEGRNFGKHPVTPWGIQTKGKKTRKNKRTD. Basic residues predominate over residues 253–264; sequence KGKKTRKNKRTD.

The protein belongs to the universal ribosomal protein uL2 family. As to quaternary structure, part of the 50S ribosomal subunit. Forms a bridge to the 30S subunit in the 70S ribosome.

Functionally, one of the primary rRNA binding proteins. Required for association of the 30S and 50S subunits to form the 70S ribosome, for tRNA binding and peptide bond formation. It has been suggested to have peptidyltransferase activity; this is somewhat controversial. Makes several contacts with the 16S rRNA in the 70S ribosome. The protein is Large ribosomal subunit protein uL2 of Buchnera aphidicola subsp. Acyrthosiphon pisum (strain 5A).